The primary structure comprises 435 residues: Glutamyl-tRNA reductase (435 aa).

Residues 50 to 53 (TCNR), Ser110, 115 to 117 (ETQ), and Gln121 contribute to the substrate site. The active-site Nucleophile is Cys51. An NADP(+)-binding site is contributed by 189 to 194 (GAGEMS).

It belongs to the glutamyl-tRNA reductase family. As to quaternary structure, homodimer.

It catalyses the reaction (S)-4-amino-5-oxopentanoate + tRNA(Glu) + NADP(+) = L-glutamyl-tRNA(Glu) + NADPH + H(+). It functions in the pathway porphyrin-containing compound metabolism; protoporphyrin-IX biosynthesis; 5-aminolevulinate from L-glutamyl-tRNA(Glu): step 1/2. In terms of biological role, catalyzes the NADPH-dependent reduction of glutamyl-tRNA(Glu) to glutamate 1-semialdehyde (GSA). The sequence is that of Glutamyl-tRNA reductase from Campylobacter lari (strain RM2100 / D67 / ATCC BAA-1060).